The sequence spans 331 residues: NADH-ubiquinone oxidoreductase chain 1 (331 aa).

The next 8 helical transmembrane spans lie at 8–28 (LLEI…MTVI), 75–95 (LFFL…GVIP), 107–127 (LGIL…LFAG), 147–167 (ISYE…CGTF), 178–198 (SVWY…SALA), 224–244 (GMIF…MSTF), 266–286 (FINL…FLFV), and 308–328 (MLPV…AFDI).

Belongs to the complex I subunit 1 family.

Its subcellular location is the mitochondrion inner membrane. The enzyme catalyses a ubiquinone + NADH + 5 H(+)(in) = a ubiquinol + NAD(+) + 4 H(+)(out). In terms of biological role, core subunit of the mitochondrial membrane respiratory chain NADH dehydrogenase (Complex I) that is believed to belong to the minimal assembly required for catalysis. Complex I functions in the transfer of electrons from NADH to the respiratory chain. The immediate electron acceptor for the enzyme is believed to be ubiquinone. The sequence is that of NADH-ubiquinone oxidoreductase chain 1 (ND1) from Mycosarcoma maydis (Corn smut fungus).